The sequence spans 65 residues: Prokaryotic ubiquitin-like protein Pup (65 aa).

A compositionally biased stretch (basic and acidic residues) spans 1 to 13 (MAQEQKQPRKSSE). Positions 1 to 34 (MAQEQKQPRKSSEADEAVEAVAETDVSERKEALD) are disordered. Positions 21–59 (VAETDVSERKEALDSDVDDILDEIDDVLETNAEDFVKSF) are ARC ATPase binding. Residues 25–49 (DVSERKEALDSDVDDILDEIDDVLE) are a coiled coil. An Isoglutamyl lysine isopeptide (Glu-Lys) (interchain with K-? in acceptor proteins) cross-link involves residue E65.

This sequence belongs to the prokaryotic ubiquitin-like protein family. As to quaternary structure, strongly interacts with the proteasome-associated ATPase ARC through a hydrophobic interface; the interacting region of Pup lies in its C-terminal half. There is one Pup binding site per ARC hexamer ring.

The protein operates within protein degradation; proteasomal Pup-dependent pathway. Protein modifier that is covalently attached to lysine residues of substrate proteins, thereby targeting them for proteasomal degradation. The tagging system is termed pupylation. The sequence is that of Prokaryotic ubiquitin-like protein Pup from Nocardioides sp. (strain ATCC BAA-499 / JS614).